The primary structure comprises 203 residues: Proteasome subunit beta 2 (203 aa).

Positions M1 to G10 are cleaved as a propeptide — removed in mature form; by autocatalysis. The Nucleophile role is filled by T11.

It belongs to the peptidase T1B family. In terms of assembly, the 20S proteasome core is composed of 14 alpha and 14 beta subunits that assemble into four stacked heptameric rings, resulting in a barrel-shaped structure. The two inner rings, each composed of seven catalytic beta subunits, are sandwiched by two outer rings, each composed of seven alpha subunits. The catalytic chamber with the active sites is on the inside of the barrel. Has a gated structure, the ends of the cylinder being occluded by the N-termini of the alpha-subunits. Is capped at one or both ends by the proteasome regulatory ATPase, PAN.

The protein localises to the cytoplasm. The catalysed reaction is Cleavage of peptide bonds with very broad specificity.. The formation of the proteasomal ATPase PAN-20S proteasome complex, via the docking of the C-termini of PAN into the intersubunit pockets in the alpha-rings, triggers opening of the gate for substrate entry. Interconversion between the open-gate and close-gate conformations leads to a dynamic regulation of the 20S proteasome proteolysis activity. Functionally, component of the proteasome core, a large protease complex with broad specificity involved in protein degradation. The protein is Proteasome subunit beta 2 of Sulfolobus acidocaldarius (strain ATCC 33909 / DSM 639 / JCM 8929 / NBRC 15157 / NCIMB 11770).